A 246-amino-acid polypeptide reads, in one-letter code: DNA-directed RNA polymerase subunit alpha (246 aa).

It belongs to the RNA polymerase alpha chain family. As to quaternary structure, in plastids the minimal PEP RNA polymerase catalytic core is composed of four subunits: alpha, beta, beta', and beta''. When a (nuclear-encoded) sigma factor is associated with the core the holoenzyme is formed, which can initiate transcription (Potential).

It localises to the plastid. The catalysed reaction is RNA(n) + a ribonucleoside 5'-triphosphate = RNA(n+1) + diphosphate. Its function is as follows. DNA-dependent RNA polymerase catalyzes the transcription of DNA into RNA using the four ribonucleoside triphosphates as substrates. This Helicosporidium sp. subsp. Simulium jonesii (Green alga) protein is DNA-directed RNA polymerase subunit alpha (rpoA).